Consider the following 126-residue polypeptide: Glycerol dehydrogenase small subunit (126 aa).

4 helical membrane passes run 13–33, 41–61, 67–87, and 92–112; these read WLTL…VIAG, GSVY…FMLM, AFLY…EVGF, and LLPR…TIPV.

Its subcellular location is the cell membrane. It carries out the reaction glycerol + A = dihydroxyacetone + AH2. Functionally, catalyzes the oxidation of glycerol to glycerone. Also acts, more slowly, on a number of other polyols including D-sorbitol, D-arabinitol, D-mannitol, meso-erythritol, adonitol and propylene glycol. This is Glycerol dehydrogenase small subunit (sldB) from Gluconobacter oxydans (strain 621H) (Gluconobacter suboxydans).